The chain runs to 586 residues: Mitogen-activated protein kinase 15 (586 aa).

Residues 14–305 (YDIKKRLGKG…AEEALEHPYV (292 aa)) enclose the Protein kinase domain. ATP contacts are provided by residues 20-28 (LGKGAYGIV) and Lys43. Asp138 serves as the catalytic Proton acceptor. Disordered regions lie at residues 354 to 506 (QKRE…DAPP) and 520 to 539 (NQRT…RFGR). Residues 382 to 393 (PAPPAGTNPAPQ) are compositionally biased toward pro residues. Low complexity predominate over residues 400–414 (PQRAAIAAPNQPPAQ). A compositionally biased stretch (polar residues) spans 415-439 (KDSTQQSPKIKAPSSNPITHSTTHG). The span at 452-463 (AGQQGAAGTTAQ) shows a compositional bias: low complexity. A compositionally biased stretch (basic and acidic residues) spans 464 to 473 (EVRKEVESRS). Polar residues predominate over residues 484–498 (FSHSQQARAAATNSA).

As to quaternary structure, interacts with dvl2.

The protein localises to the cytoplasm. It is found in the cytoskeleton. Its subcellular location is the cilium basal body. It localises to the cell projection. The protein resides in the cilium. The protein localises to the cell junction. The catalysed reaction is L-seryl-[protein] + ATP = O-phospho-L-seryl-[protein] + ADP + H(+). It catalyses the reaction L-threonyl-[protein] + ATP = O-phospho-L-threonyl-[protein] + ADP + H(+). Its function is as follows. Atypical MAPK protein that regulates ciliogenesis by phosphorylating rcsd1 through its binding with dvl2. The sequence is that of Mitogen-activated protein kinase 15 from Xenopus laevis (African clawed frog).